The chain runs to 810 residues: Lon protease (810 aa).

A Lon N-terminal domain is found at 16-209 (YPVPPLRDIV…RVYAFMEGEI (194 aa)). 361 to 368 (GPPGVGKT) is a binding site for ATP. The 182-residue stretch at 598–779 (EDLVGVTTGL…DDVLKHALVR (182 aa)) folds into the Lon proteolytic domain. Active-site residues include Ser685 and Lys728.

This sequence belongs to the peptidase S16 family. Homohexamer. Organized in a ring with a central cavity.

It localises to the cytoplasm. It catalyses the reaction Hydrolysis of proteins in presence of ATP.. In terms of biological role, ATP-dependent serine protease that mediates the selective degradation of mutant and abnormal proteins as well as certain short-lived regulatory proteins. Required for cellular homeostasis and for survival from DNA damage and developmental changes induced by stress. Degrades polypeptides processively to yield small peptide fragments that are 5 to 10 amino acids long. Binds to DNA in a double-stranded, site-specific manner. Involved in iron uptake. This chain is Lon protease, found in Azospirillum brasilense.